Here is a 391-residue protein sequence, read N- to C-terminus: NADH-quinone oxidoreductase subunit D (391 aa).

It belongs to the complex I 49 kDa subunit family. NDH-1 is composed of 14 different subunits. Subunits NuoB, C, D, E, F, and G constitute the peripheral sector of the complex.

The protein localises to the cell inner membrane. It catalyses the reaction a quinone + NADH + 5 H(+)(in) = a quinol + NAD(+) + 4 H(+)(out). Functionally, NDH-1 shuttles electrons from NADH, via FMN and iron-sulfur (Fe-S) centers, to quinones in the respiratory chain. The immediate electron acceptor for the enzyme in this species is believed to be ubiquinone. Couples the redox reaction to proton translocation (for every two electrons transferred, four hydrogen ions are translocated across the cytoplasmic membrane), and thus conserves the redox energy in a proton gradient. The protein is NADH-quinone oxidoreductase subunit D of Rickettsia massiliae (strain Mtu5).